Consider the following 241-residue polypeptide: DNA repair protein RecO (241 aa).

It belongs to the RecO family.

In terms of biological role, involved in DNA repair and RecF pathway recombination. This chain is DNA repair protein RecO, found in Rickettsia canadensis (strain McKiel).